A 258-amino-acid polypeptide reads, in one-letter code: 5'-nucleotidase SurE (258 aa).

A divalent metal cation is bound by residues aspartate 9, aspartate 10, serine 40, and asparagine 95.

This sequence belongs to the SurE nucleotidase family. Requires a divalent metal cation as cofactor.

The protein resides in the cytoplasm. It catalyses the reaction a ribonucleoside 5'-phosphate + H2O = a ribonucleoside + phosphate. Its function is as follows. Nucleotidase that shows phosphatase activity on nucleoside 5'-monophosphates. This is 5'-nucleotidase SurE from Nitratiruptor sp. (strain SB155-2).